Here is a 199-residue protein sequence, read N- to C-terminus: Holliday junction branch migration complex subunit RuvA (199 aa).

The interval 1 to 64 is domain I; that stretch reads MIGRITGILL…EDGHFLYGFA (64 aa). The tract at residues 65 to 143 is domain II; that stretch reads SADERAAFRQ…RALPGFGAST (79 aa). Positions 144-152 are flexible linker; the sequence is VPGAAAQPA. The interval 152 to 199 is domain III; it reads ADSRSDILNALLALGYSDKEAQSALKAIPPETGVSDGIRQALKLLSKA.

It belongs to the RuvA family. Homotetramer. Forms an RuvA(8)-RuvB(12)-Holliday junction (HJ) complex. HJ DNA is sandwiched between 2 RuvA tetramers; dsDNA enters through RuvA and exits via RuvB. An RuvB hexamer assembles on each DNA strand where it exits the tetramer. Each RuvB hexamer is contacted by two RuvA subunits (via domain III) on 2 adjacent RuvB subunits; this complex drives branch migration. In the full resolvosome a probable DNA-RuvA(4)-RuvB(12)-RuvC(2) complex forms which resolves the HJ.

It localises to the cytoplasm. The RuvA-RuvB-RuvC complex processes Holliday junction (HJ) DNA during genetic recombination and DNA repair, while the RuvA-RuvB complex plays an important role in the rescue of blocked DNA replication forks via replication fork reversal (RFR). RuvA specifically binds to HJ cruciform DNA, conferring on it an open structure. The RuvB hexamer acts as an ATP-dependent pump, pulling dsDNA into and through the RuvAB complex. HJ branch migration allows RuvC to scan DNA until it finds its consensus sequence, where it cleaves and resolves the cruciform DNA. This Aromatoleum aromaticum (strain DSM 19018 / LMG 30748 / EbN1) (Azoarcus sp. (strain EbN1)) protein is Holliday junction branch migration complex subunit RuvA.